The primary structure comprises 240 residues: EHSGDNVRHVFLNHNFTLVASVTIEEAPSEKTPLLTALLGDAEPPYFMRLSYTADNKWETISKGDKKLTTESRPWVPKKEHQVALMLQGNKASVYIDGESLGEEAPLTVETPLEPFGFCFGACDFDDDDDGGDDDDEEDSQEESSPKESSPEKIGKKPHVTVTNVFLYNRPLNPTEMRAIKDRIPVSTRAPEPQVKIAPKPVAPAAPGSLRCLAHGKYQQHRGGQLWGEPPIPNMRQRDA.

Positions 127–142 are enriched in acidic residues; sequence DDDDGGDDDDEEDSQE. Disordered regions lie at residues 127–158 and 221–240; these read DDDD…GKKP and HRGG…QRDA. The span at 144 to 155 shows a compositional bias: basic and acidic residues; the sequence is SSPKESSPEKIG.

This sequence belongs to the glycosyl hydrolase 33 family.

It carries out the reaction Hydrolysis of alpha-(2-&gt;3)-, alpha-(2-&gt;6)-, alpha-(2-&gt;8)- glycosidic linkages of terminal sialic acid residues in oligosaccharides, glycoproteins, glycolipids, colominic acid and synthetic substrates.. Functionally, developmentally regulated neuraminidase implicated in parasite invasion of cells. May contribute to the pathology during T.cruzi infection by cleaving sialic acid from cells of the immune system. This is Sialidase 85-1.2 (SA85-1.2) from Trypanosoma cruzi.